The primary structure comprises 374 residues: Protein TAB2 homolog, chloroplastic (374 aa).

The N-terminal 64 residues, 1–64, are a transit peptide targeting the chloroplast; it reads MATLGFNTRR…SLSITKEQEV (64 aa). The interval 58-84 is disordered; the sequence is ITKEQEVANEVEEDDPTSELSYLDPES. The span at 64–74 shows a compositional bias: acidic residues; sequence VANEVEEDDPT.

The protein localises to the plastid. It is found in the chloroplast. Its function is as follows. Nuclear genome-encoded A/U-rich RNA-binding protein involved in the biogenesis of photosystem I (PSI) and II (PSII). Required for the light-controlled accumulation of PSI and PSII during early plant development. Does not seem to be required for the translation of mRNAs of the PSI subunits. The sequence is that of Protein TAB2 homolog, chloroplastic from Arabidopsis thaliana (Mouse-ear cress).